We begin with the raw amino-acid sequence, 263 residues long: Chaperone protein ClpE (263 aa).

The N-terminal stretch at 1–34 (MSKRNAVTTFFTNRVTKALGMTLALMMTCQSAMA) is a signal peptide. Polar residues predominate over residues 238–255 (QKKTPTSSGQKASDSLVN). The interval 238 to 263 (QKKTPTSSGQKASDSLVNPSDKADKK) is disordered.

This sequence belongs to the periplasmic pilus chaperone family.

The protein localises to the periplasm. Functionally, involved in the biogenesis of the CS31A capsule-like antigen. In Escherichia coli, this protein is Chaperone protein ClpE (clpE).